Consider the following 176-residue polypeptide: Conidiation-specific protein 8 (176 aa).

Disordered stretches follow at residues 1–66 (MDDT…SKLI) and 79–162 (AASE…PQGF). The span at 79-99 (AASEAFRSERSASTSSTTSET) shows a compositional bias: low complexity.

This is Conidiation-specific protein 8 (con-8) from Neurospora crassa (strain ATCC 24698 / 74-OR23-1A / CBS 708.71 / DSM 1257 / FGSC 987).